A 1628-amino-acid polypeptide reads, in one-letter code: Lysine-specific histone demethylase 1 homolog 3 (1628 aa).

The interval 1-71 (MDGKEKKSGS…KKLSALGKDS (71 aa)) is disordered. Positions 19–28 (FDDDADDDEP) are enriched in acidic residues. Residues 43–64 (KDKVETESTGKQRQKQVVEKKL) are compositionally biased toward basic and acidic residues. The SWIRM domain occupies 378–478 (GRAAAVTAGL…AGISSVNGKA (101 aa)). Residues E647, R649, R655, and E1077 each coordinate FAD. Positions 1271 to 1317 (SGKKSLRQANTTNTSRIRRKLNSPDTDSKGKLSNGNDVKTDEEFEDN) are disordered.

It belongs to the flavin monoamine oxidase family. The cofactor is FAD.

Functionally, probable histone demethylase that reduces the levels of histone H3 'Lys-4' methylation in chromatin. This Arabidopsis thaliana (Mouse-ear cress) protein is Lysine-specific histone demethylase 1 homolog 3 (LDL3).